Consider the following 132-residue polypeptide: Small ribosomal subunit protein uS8 (132 aa).

It belongs to the universal ribosomal protein uS8 family. In terms of assembly, part of the 30S ribosomal subunit. Contacts proteins S5 and S12.

Its function is as follows. One of the primary rRNA binding proteins, it binds directly to 16S rRNA central domain where it helps coordinate assembly of the platform of the 30S subunit. The protein is Small ribosomal subunit protein uS8 of Clostridium tetani (strain Massachusetts / E88).